Reading from the N-terminus, the 251-residue chain is Triosephosphate isomerase (251 aa).

Asn-9–Lys-11 is a substrate binding site. His-95 acts as the Electrophile in catalysis. The Proton acceptor role is filled by Glu-167. Substrate-binding positions include Gly-173, Ser-213, and Gly-234–Gly-235.

The protein belongs to the triosephosphate isomerase family. As to quaternary structure, homodimer.

Its subcellular location is the cytoplasm. The enzyme catalyses D-glyceraldehyde 3-phosphate = dihydroxyacetone phosphate. Its pathway is carbohydrate biosynthesis; gluconeogenesis. The protein operates within carbohydrate degradation; glycolysis; D-glyceraldehyde 3-phosphate from glycerone phosphate: step 1/1. Involved in the gluconeogenesis. Catalyzes stereospecifically the conversion of dihydroxyacetone phosphate (DHAP) to D-glyceraldehyde-3-phosphate (G3P). This chain is Triosephosphate isomerase, found in Pediococcus pentosaceus (strain ATCC 25745 / CCUG 21536 / LMG 10740 / 183-1w).